Consider the following 275-residue polypeptide: Large ribosomal subunit protein uL2c (275 aa).

Disordered stretches follow at residues 32–53 and 218–242; these read SLSKMNHRSKGRNNRGVITCRH and PTVRGSVMNPNDHPHGGGEGRAPIG.

The protein belongs to the universal ribosomal protein uL2 family. In terms of assembly, part of the 50S ribosomal subunit.

It localises to the plastid. The protein resides in the chloroplast. The protein is Large ribosomal subunit protein uL2c (rpl2) of Tetradesmus obliquus (Green alga).